We begin with the raw amino-acid sequence, 349 residues long: Histidinol-phosphate aminotransferase 1 (349 aa).

Position 213 is an N6-(pyridoxal phosphate)lysine (Lys213).

This sequence belongs to the class-II pyridoxal-phosphate-dependent aminotransferase family. Histidinol-phosphate aminotransferase subfamily. In terms of assembly, homodimer. Pyridoxal 5'-phosphate is required as a cofactor.

The enzyme catalyses L-histidinol phosphate + 2-oxoglutarate = 3-(imidazol-4-yl)-2-oxopropyl phosphate + L-glutamate. It functions in the pathway amino-acid biosynthesis; L-histidine biosynthesis; L-histidine from 5-phospho-alpha-D-ribose 1-diphosphate: step 7/9. The polypeptide is Histidinol-phosphate aminotransferase 1 (Carboxydothermus hydrogenoformans (strain ATCC BAA-161 / DSM 6008 / Z-2901)).